A 328-amino-acid polypeptide reads, in one-letter code: Cytochrome f (328 aa).

The N-terminal stretch at 1–44 is a signal peptide; it reads MRNPDTLGLWTKTMVALRRFTVLAIATVSVFLITDLGLPQAASA. Positions 45, 66, 69, and 70 each coordinate heme. A helical membrane pass occupies residues 296 to 313; the sequence is FLVLFLAGIMLSQILLVL.

This sequence belongs to the cytochrome f family. The 4 large subunits of the cytochrome b6-f complex are cytochrome b6, subunit IV (17 kDa polypeptide, PetD), cytochrome f and the Rieske protein, while the 4 small subunits are PetG, PetL, PetM and PetN. The complex functions as a dimer. Heme is required as a cofactor.

The protein localises to the cellular thylakoid membrane. Its function is as follows. Component of the cytochrome b6-f complex, which mediates electron transfer between photosystem II (PSII) and photosystem I (PSI), cyclic electron flow around PSI, and state transitions. In Synechocystis sp. (strain ATCC 27184 / PCC 6803 / Kazusa), this protein is Cytochrome f (petA).